A 462-amino-acid polypeptide reads, in one-letter code: Glycoprotein endo-alpha-1,2-mannosidase (462 aa).

The Cytoplasmic segment spans residues 1 to 8; that stretch reads MAKFRRRT. A helical; Signal-anchor for type II membrane protein transmembrane segment spans residues 9–29; sequence CIILALFILFIFSLMMGLKML. Topologically, residues 30 to 462 are lumenal; that stretch reads RPNTATFGAP…YALDRQLPVS (433 aa). Residues 60–462 are catalytic; it reads DFQKSDRINS…YALDRQLPVS (403 aa).

This sequence belongs to the glycosyl hydrolase 99 family. Undergoes proteolytic cleavage in the C-terminal region. As to expression, highly expressed in the liver and kidney. Expressed at lower levels in muscle, pancreas, heart, placenta, lung and brain.

It is found in the golgi apparatus membrane. It carries out the reaction N-{alpha-Glc-(1-&gt;3)-alpha-Man-(1-&gt;2)-alpha-Man-(1-&gt;2)-alpha-Man-(1-&gt;3)-[alpha-Man-(1-&gt;2)-alpha-Man-(1-&gt;3)-[alpha-Man-(1-&gt;2)-alpha-Man-(1-&gt;6)]-alpha-Man-(1-&gt;6)]-beta-Man-(1-&gt;4)-beta-GlcNAc-(1-&gt;4)-beta-GlcNAc}-L-asparaginyl-[protein] + H2O = alpha-D-glucosyl-(1-&gt;3)-D-mannopyranose + N(4)-{alpha-D-Man-(1-&gt;2)-alpha-D-Man-(1-&gt;3)-[alpha-D-Man-(1-&gt;2)-alpha-D-Man-(1-&gt;3)-[alpha-D-Man-(1-&gt;2)-alpha-D-Man-(1-&gt;6)]-alpha-D-Man-(1-&gt;6)]-beta-D-Man-(1-&gt;4)-beta-D-GlaNAc-(1-&gt;4)-beta-D-GlcNAc}-L-asparaginyl-[protein] (N-glucan mannose isomer 8A1,2,3B1,2). The polypeptide is Glycoprotein endo-alpha-1,2-mannosidase (MANEA) (Homo sapiens (Human)).